The chain runs to 874 residues: UPF0182 protein Sfum_2137 (874 aa).

The next 7 helical transmembrane spans lie at 7–27 (WPLI…LSSL), 57–77 (IVFG…FWVA), 110–130 (SLWV…LPIF), 171–191 (RRLL…YLLE), 208–228 (LHLS…YVLQ), 252–272 (VIWA…FSMI), and 283–303 (PLVV…SAFL).

Belongs to the UPF0182 family.

It is found in the cell membrane. The polypeptide is UPF0182 protein Sfum_2137 (Syntrophobacter fumaroxidans (strain DSM 10017 / MPOB)).